The primary structure comprises 402 residues: 5-methylphenazine-1-carboxylate 1-monooxygenase (402 aa).

Residues 14-15, 35-36, 43-45, Arg106, Val132, Arg191, and Asp310 each bind FAD; these read IG, ES, and LGV. A compositionally biased stretch (basic and acidic residues) spans 368–385; the sequence is REKEEWAAASRPKTEKSA. Residues 368 to 402 are disordered; it reads REKEEWAAASRPKTEKSAALEAITGSYRNQVERPR.

In terms of assembly, monomer in solution. Probably interacts transiently with PhzM. FAD serves as cofactor.

The catalysed reaction is 5-methyl-phenazine-1-carboxylate + NADH + O2 + 2 H(+) = pyocyanin + CO2 + NAD(+) + H2O. It participates in secondary metabolite biosynthesis; pyocyanine biosynthesis. Its function is as follows. Involved in the biosynthesis of pyocyanine, a blue-pigmented phenazine derivative, which plays a role in virulence. Catalyzes the oxidative decarboxylation of 5-methylphenazine-1-carboxylate (5-methyl-PCA) to pyocyanine. Can also act on phenazine-1-carboxylate (PCA), converting it into 1-hydroxyphenazine (1-HP). However, PCA is a poor substrate. The sequence is that of 5-methylphenazine-1-carboxylate 1-monooxygenase from Pseudomonas aeruginosa (strain ATCC 15692 / DSM 22644 / CIP 104116 / JCM 14847 / LMG 12228 / 1C / PRS 101 / PAO1).